The following is a 167-amino-acid chain: Probable glutathione peroxidase 8 (167 aa).

Cys-41 is a catalytic residue.

This sequence belongs to the glutathione peroxidase family.

It carries out the reaction 2 glutathione + H2O2 = glutathione disulfide + 2 H2O. Functionally, may constitute a glutathione peroxidase-like protective system against oxidative stresses. The chain is Probable glutathione peroxidase 8 (GPX8) from Arabidopsis thaliana (Mouse-ear cress).